A 550-amino-acid chain; its full sequence is Hydroxylamine reductase (550 aa).

Residues cysteine 3, cysteine 6, cysteine 18, and cysteine 25 each contribute to the [2Fe-2S] cluster site. 8 residues coordinate hybrid [4Fe-2O-2S] cluster: histidine 249, glutamate 273, cysteine 317, cysteine 405, cysteine 433, cysteine 458, glutamate 492, and lysine 494. Cysteine 405 is subject to Cysteine persulfide.

This sequence belongs to the HCP family. It depends on [2Fe-2S] cluster as a cofactor. The cofactor is hybrid [4Fe-2O-2S] cluster.

The protein localises to the cytoplasm. The catalysed reaction is A + NH4(+) + H2O = hydroxylamine + AH2 + H(+). Its function is as follows. Catalyzes the reduction of hydroxylamine to form NH(3) and H(2)O. The polypeptide is Hydroxylamine reductase (Escherichia coli O139:H28 (strain E24377A / ETEC)).